The following is a 681-amino-acid chain: Minichromosome maintenance domain-containing protein 2 (681 aa).

Residue Ser-292 is modified to Phosphoserine. An MCM domain is found at 533 to 621; that stretch reads KQFTTEDFEK…LIAALLFEIS (89 aa).

Functionally, plays an important role in meiotic recombination and associated DNA double-strand break repair. In Rattus norvegicus (Rat), this protein is Minichromosome maintenance domain-containing protein 2 (Mcmdc2).